The following is a 381-amino-acid chain: MSGVVRTLSRCLLPAEAGGARERRAGSGARDAEREARRRSRDIDALLARERRAVRRLVKILLLGAGESGKSTFLKQMRIIHGREFDQKALLEFRDTIFDNILKGSRVLVDARDKLGIPWQYSENEKHGMFLMAFENKAGLPVEPATFQLYVPALSALWRDSGIREAFSRRSEFQLGESVKYFLDNLDRIGQLNYFPSKQDILLARKATKGIVEHDFVIKKIPFKMVDVGGQRSQRQKWFQCFDGITSILFMVSSSEYDQVLMEDRRTNRLVESMNIFETIVNNKLFFNVSIILFLNKMDLLVEKVKTVSIKKHFPDFRGDPHRLEDVQRYLVQCFDRKRRNRSKPLFHHFTTAIDTENVRFVFHAVKDTILQENLKDIMLQ.

A lipid anchor (S-palmitoyl cysteine) is attached at Cys11. The G-alpha domain maps to Arg56–Gln381. The G1 motif stretch occupies residues Lys59–Thr72. GTP-binding positions include Glu67–Thr72 and Leu202–Arg205. Ser71 is a Mg(2+) binding site. The segment at Asp200 to Thr208 is G2 motif. Position 208 (Thr208) interacts with Mg(2+). A Phosphothreonine modification is found at Thr208. Residues Phe223–Arg232 form a G3 motif region. Residues Ile292 to Asp299 are G4 motif. Residues Asn296 to Asp299 and Ala353 each bind GTP. The segment at Thr351–Thr356 is G5 motif.

The protein belongs to the G-alpha family. G(12) subfamily. As to quaternary structure, g proteins are composed of 3 units; alpha, beta and gamma. The alpha chain contains the guanine nucleotide binding site. Interacts with UBXD5. Interacts (in GTP-bound form) with PPP5C (via TPR repeats); activates PPP5C phosphatase activity and translocates PPP5C to the cell membrane. Interacts with RGS22. Interacts (via N-terminus) with NAPA; the interaction promotes CDH5 localization to plasma membrane. Interacts with CTNND1 (via N-terminus); the interaction regulates CDH1-mediated cell-cell adhesion. Interacts with PPP2R1A; the interaction promotes protein phosphatase 2A activation causing dephosphorylation of MAPT. Interacts (in GTP-bound form) with ARHGEF1. Interacts (in GTP-bound form) with ARHGEF11 (via RGS domain). Interacts (in GTP-bound form) with ARHGEF12 (via RGS domain).

Its subcellular location is the cell membrane. It localises to the lateral cell membrane. The protein resides in the cytoplasm. Functionally, guanine nucleotide-binding proteins (G proteins) are involved as modulators or transducers in various transmembrane signaling systems. Activates effector molecule RhoA by binding and activating RhoGEFs (ARHGEF12/LARG). GNA12-dependent Rho signaling subsequently regulates transcription factor AP-1 (activating protein-1). GNA12-dependent Rho signaling also regulates protein phosphatese 2A activation causing dephosphorylation of its target proteins. Promotes tumor cell invasion and metastasis by activating RhoA/ROCK signaling pathway and up-regulating pro-inflammatory cytokine production. Inhibits CDH1-mediated cell adhesion in process independent from Rho activation. Together with NAPA promotes CDH5 localization to plasma membrane. May play a role in the control of cell migration through the TOR signaling cascade. In Homo sapiens (Human), this protein is Guanine nucleotide-binding protein subunit alpha-12 (GNA12).